The primary structure comprises 402 residues: Cysteine-rich venom protein (402 aa).

An N-terminal signal peptide occupies residues 1–13 (MNLALFIIFATIF). The SCP domain occupies 57 to 199 (LETHNQLRNK…VKKVLYTCNY (143 aa)).

It belongs to the CRISP family. Post-translationally, contains 7 disulfide bonds. Expressed by the venom gland.

Its subcellular location is the secreted. The chain is Cysteine-rich venom protein from Tityus serrulatus (Brazilian scorpion).